A 271-amino-acid chain; its full sequence is Formamidopyrimidine-DNA glycosylase (271 aa).

The active-site Schiff-base intermediate with DNA is proline 2. Glutamate 3 (proton donor) is an active-site residue. Lysine 58 acts as the Proton donor; for beta-elimination activity in catalysis. DNA contacts are provided by histidine 91, arginine 110, and arginine 152. The segment at 237-271 adopts an FPG-type zinc-finger fold; sequence SVYGRNDAPCPGCGAPIRRSRQGGRSTYFCDRCQH. The active-site Proton donor; for delta-elimination activity is the arginine 261.

Belongs to the FPG family. In terms of assembly, monomer. The cofactor is Zn(2+).

The enzyme catalyses Hydrolysis of DNA containing ring-opened 7-methylguanine residues, releasing 2,6-diamino-4-hydroxy-5-(N-methyl)formamidopyrimidine.. It carries out the reaction 2'-deoxyribonucleotide-(2'-deoxyribose 5'-phosphate)-2'-deoxyribonucleotide-DNA = a 3'-end 2'-deoxyribonucleotide-(2,3-dehydro-2,3-deoxyribose 5'-phosphate)-DNA + a 5'-end 5'-phospho-2'-deoxyribonucleoside-DNA + H(+). In terms of biological role, involved in base excision repair of DNA damaged by oxidation or by mutagenic agents. Acts as a DNA glycosylase that recognizes and removes damaged bases. Has a preference for oxidized purines, such as 7,8-dihydro-8-oxoguanine (8-oxoG). Has AP (apurinic/apyrimidinic) lyase activity and introduces nicks in the DNA strand. Cleaves the DNA backbone by beta-delta elimination to generate a single-strand break at the site of the removed base with both 3'- and 5'-phosphates. The chain is Formamidopyrimidine-DNA glycosylase from Geotalea uraniireducens (strain Rf4) (Geobacter uraniireducens).